The sequence spans 365 residues: MTAIGLMSGTSLDGVDVALIKTDGRRVSALGPTGYRPYSDAERSLLRQALAEAGQLTRRDDRPGSLGEAERMVTLAHAEAAANFTAQHGIAREDVDIVGFHGQTVLHRPAQKLTVQIGDAAALAKAIRVPVMHDFRAADVAAGGQGAPLVPVYHRALAQSLDRSGPLAVVNIGGVSNISYIDGHETLIACDTGPGNALLDDFVLRVSGQPFDAEGRLAAQGQVDEAWVAAALQHPFFAAPPPKSLDRNEFAALALPKLTPADGAATLTAFTAGAIAGIVPLLPKLPLSWIVTGGGARNLSLLRMLREKLAPASVENADALGWSADAMEAQAFGFLAARGLKGLPLTYPQTTGVVIPMTGGRIARP.

9-16 (GTSLDGVD) is a binding site for ATP.

It belongs to the anhydro-N-acetylmuramic acid kinase family.

The enzyme catalyses 1,6-anhydro-N-acetyl-beta-muramate + ATP + H2O = N-acetyl-D-muramate 6-phosphate + ADP + H(+). It functions in the pathway amino-sugar metabolism; 1,6-anhydro-N-acetylmuramate degradation. Its pathway is cell wall biogenesis; peptidoglycan recycling. In terms of biological role, catalyzes the specific phosphorylation of 1,6-anhydro-N-acetylmuramic acid (anhMurNAc) with the simultaneous cleavage of the 1,6-anhydro ring, generating MurNAc-6-P. Is required for the utilization of anhMurNAc either imported from the medium or derived from its own cell wall murein, and thus plays a role in cell wall recycling. In Rhodopseudomonas palustris (strain BisB18), this protein is Anhydro-N-acetylmuramic acid kinase.